We begin with the raw amino-acid sequence, 105 residues long: Nucleoid-associated protein MW0434 (105 aa).

The segment at 1–33 (MRGGGNMQQMMKQMQKMQKKMAQEQEKLKEERI) is disordered. Over residues 7–16 (MQQMMKQMQK) the composition is skewed to low complexity. Residues 21-33 (MAQEQEKLKEERI) are compositionally biased toward basic and acidic residues.

This sequence belongs to the YbaB/EbfC family. As to quaternary structure, homodimer.

The protein resides in the cytoplasm. It localises to the nucleoid. Binds to DNA and alters its conformation. May be involved in regulation of gene expression, nucleoid organization and DNA protection. This chain is Nucleoid-associated protein MW0434, found in Staphylococcus aureus (strain MW2).